A 333-amino-acid polypeptide reads, in one-letter code: Phosphate acyltransferase (333 aa).

The protein belongs to the PlsX family. Homodimer. Probably interacts with PlsY.

The protein resides in the cytoplasm. The enzyme catalyses a fatty acyl-[ACP] + phosphate = an acyl phosphate + holo-[ACP]. The protein operates within lipid metabolism; phospholipid metabolism. Catalyzes the reversible formation of acyl-phosphate (acyl-PO(4)) from acyl-[acyl-carrier-protein] (acyl-ACP). This enzyme utilizes acyl-ACP as fatty acyl donor, but not acyl-CoA. This is Phosphate acyltransferase from Aliarcobacter butzleri (strain RM4018) (Arcobacter butzleri).